The chain runs to 255 residues: Short chain dehydrogenase adrF (255 aa).

Positions 11, 118, 150, 154, and 183 each coordinate NADP(+). Tyr-150 serves as the catalytic Proton acceptor. The active-site Lowers pKa of active site Tyr is Lys-154.

The protein belongs to the short-chain dehydrogenases/reductases (SDR) family.

It participates in secondary metabolite biosynthesis; terpenoid biosynthesis. Functionally, short chain dehydrogenase; part of the gene cluster that mediates the biosynthesis of andrastins, meroterpenoid compounds that exhibit inhibitory activity against ras farnesyltransferase, suggesting that they could be promising leads for antitumor agents. The first step of the pathway is the synthesis of 3,5-dimethylorsellinic acid (DMOA) by the polyketide synthase adrD via condensation of one acetyl-CoA starter unit with 3 malonyl-CoA units and 2 methylations. DMAO is then converted to farnesyl-DMAO by the prenyltransferase adrG. The methyltransferase adrK catalyzes the methylation of the carboxyl group of farnesyl-DMAO to farnesyl-DMAO methyl ester which is further converted to epoxyfarnesyl-DMAO methyl ester by the FAD-dependent monooxygenase adrH. The terpene cyclase adrI then catalyzes the carbon skeletal rearrangement to generate the andrastin E, the first compound in the pathway having the andrastin scaffold, with the tetracyclic ring system. The post-cyclization tailoring enzymes adrF, adrE, adrJ, and adrA, are involved in the conversion of andrastin E into andrastin A. The short chain dehydrogenase adrF is responsible for the oxidation of the C-3 a hydroxyl group of andrastin E to yield the corresponding ketone, andrastin D. The ketoreductase adrE stereoselectively reduces the carbonyl moiety to reverse the stereochemistry of the C-3 position to yield andrastin F. The acetyltransferase adrJ is the acetyltransferase that attaches the acetyl group to the C-3 hydroxyl group of andrastin F to yield andrastin C. Finally, the cytochrome P450 monooxygenase adrA catalyzes two sequential oxidation reactions of the C-23 methyl group, to generate the corresponding alcohol andrastin B, and aldehyde andrastin A. The sequence is that of Short chain dehydrogenase adrF from Penicillium rubens (strain ATCC 28089 / DSM 1075 / NRRL 1951 / Wisconsin 54-1255) (Penicillium chrysogenum).